The sequence spans 115 residues: Large ribosomal subunit protein uL24 (115 aa).

This sequence belongs to the universal ribosomal protein uL24 family. Part of the 50S ribosomal subunit.

One of two assembly initiator proteins, it binds directly to the 5'-end of the 23S rRNA, where it nucleates assembly of the 50S subunit. Its function is as follows. One of the proteins that surrounds the polypeptide exit tunnel on the outside of the subunit. This Deinococcus geothermalis (strain DSM 11300 / CIP 105573 / AG-3a) protein is Large ribosomal subunit protein uL24.